Here is a 489-residue protein sequence, read N- to C-terminus: Amino acid transporter AVT6E (489 aa).

11 helical membrane-spanning segments follow: residues 76–96, 102–122, 156–176, 201–221, 227–247, 269–289, 310–330, 357–377, 404–424, 425–445, and 461–481; these read GIYGAVFNLTTSIIGAGIMAL, VLGLVLGFVLIILMALLSEIS, ICIIVNNGGVLVVYLIIMGDV, VLILIVMVIFLAPLCALNKID, SAASVALAVVFVVVCFVVATI, ILDLLVVIPIMSNAYVCHFNV, ITTAICVVVYASTAVSGYLLF, IVRIGYILHLVLVFPVIHFSL, VVLLALIYIGSTMIPNIWTAF, KFTGATSAVSLGFTFPALIAL, and VSWLMLILAVVVSIVGTIGNI.

The protein belongs to the amino acid/polyamine transporter 2 family. Amino acid/auxin permease (AAAP) (TC 2.A.18.6) subfamily.

It localises to the endoplasmic reticulum membrane. It is found in the vacuole membrane. The chain is Amino acid transporter AVT6E from Arabidopsis thaliana (Mouse-ear cress).